Consider the following 245-residue polypeptide: MAGVWSLSLPSCLLSLLLLLQLSRSYAGQFRVIGPGHPIRALVGDEAELPCRISPGKNATGMEVGWYRSPFSRVVHLYRNGKDQDAEQAPEYRGRTELLKESIGEGKVALRIQNVRFSDEGGYTCFFRDHSYQEEAAVELKVEDPFYWINPGVLALIALVPMLLLQVSVGLVFLFLQHRLRGKLRAEVENLHRTFDPHFLRVPCWKITLFVIVPVLGPLVALIICYNWLHRRLAGQFLEELRNPF.

An N-terminal signal peptide occupies residues 1–27 (MAGVWSLSLPSCLLSLLLLLQLSRSYA). Topologically, residues 28–155 (GQFRVIGPGH…FYWINPGVLA (128 aa)) are extracellular. Residues 30-139 (FRVIGPGHPI…HSYQEEAAVE (110 aa)) enclose the Ig-like domain. Residues Cys51 and Cys125 are joined by a disulfide bond. N-linked (GlcNAc...) asparagine glycosylation is present at Asn58. Residues 156–176 (LIALVPMLLLQVSVGLVFLFL) form a helical membrane-spanning segment. Topologically, residues 177-208 (QHRLRGKLRAEVENLHRTFDPHFLRVPCWKIT) are cytoplasmic. Residues 209–229 (LFVIVPVLGPLVALIICYNWL) traverse the membrane as a helical segment. Over 230-245 (HRRLAGQFLEELRNPF) the chain is Extracellular.

This sequence belongs to the immunoglobulin superfamily. BTN/MOG family. As to quaternary structure, homodimer. As to expression, found exclusively in the CNS, where it is localized on the surface of myelin and oligodendrocyte cytoplasmic membranes.

The protein resides in the membrane. Its function is as follows. Mediates homophilic cell-cell adhesion. Minor component of the myelin sheath. May be involved in completion and/or maintenance of the myelin sheath and in cell-cell communication. This Rattus norvegicus (Rat) protein is Myelin-oligodendrocyte glycoprotein (Mog).